Reading from the N-terminus, the 458-residue chain is Ribulose bisphosphate carboxylase (458 aa).

N111 lines the substrate pocket. K166 acts as the Proton acceptor in catalysis. K168 is a substrate binding site. Mg(2+)-binding residues include K191, D193, and E194. K191 carries the N6-carboxylysine modification. H287 acts as the Proton acceptor in catalysis. R288, H321, and S368 together coordinate substrate.

It belongs to the RuBisCO large chain family. Type II subfamily. As to quaternary structure, homodimer. The cofactor is Mg(2+).

The catalysed reaction is 2 (2R)-3-phosphoglycerate + 2 H(+) = D-ribulose 1,5-bisphosphate + CO2 + H2O. The enzyme catalyses D-ribulose 1,5-bisphosphate + O2 = 2-phosphoglycolate + (2R)-3-phosphoglycerate + 2 H(+). In terms of biological role, ruBisCO catalyzes two reactions: the carboxylation of D-ribulose 1,5-bisphosphate, the primary event in carbon dioxide fixation, as well as the oxidative fragmentation of the pentose substrate. Both reactions occur simultaneously and in competition at the same active site. In Rhodobacter capsulatus (Rhodopseudomonas capsulata), this protein is Ribulose bisphosphate carboxylase (cbbM).